The primary structure comprises 168 residues: ATP synthase F(1) complex subunit delta, mitochondrial (168 aa).

A mitochondrion-targeting transit peptide spans 1 to 22 (MLPSALLRRPGLGRLVRQVRLY). N6-acetyllysine; alternate occurs at positions 136 and 165. Residues Lys136 and Lys165 each carry the N6-succinyllysine; alternate modification.

Belongs to the ATPase epsilon chain family. Component of the ATP synthase complex composed at least of ATP5F1A/subunit alpha, ATP5F1B/subunit beta, ATP5MC1/subunit c (homooctomer), MT-ATP6/subunit a, MT-ATP8/subunit 8, ATP5ME/subunit e, ATP5MF/subunit f, ATP5MG/subunit g, ATP5MK/subunit k, ATP5MJ/subunit j, ATP5F1C/subunit gamma, ATP5F1D/subunit delta, ATP5F1E/subunit epsilon, ATP5PF/subunit F6, ATP5PB/subunit b, ATP5PD/subunit d, ATP5PO/subunit OSCP. ATP synthase complex consists of a soluble F(1) head domain (subunits alpha(3) and beta(3)) - the catalytic core - and a membrane F(0) domain - the membrane proton channel (subunits c, a, 8, e, f, g, k and j). These two domains are linked by a central stalk (subunits gamma, delta, and epsilon) rotating inside the F1 region and a stationary peripheral stalk (subunits F6, b, d, and OSCP). Component of a complex composed at least by ATPIF1, ATP5F1A, ATP5F1B, ATP5F1C AND ATP5F1E.

The protein resides in the mitochondrion. The protein localises to the mitochondrion inner membrane. Subunit delta, of the mitochondrial membrane ATP synthase complex (F(1)F(0) ATP synthase or Complex V) that produces ATP from ADP in the presence of a proton gradient across the membrane which is generated by electron transport complexes of the respiratory chain. ATP synthase complex consist of a soluble F(1) head domain - the catalytic core - and a membrane F(1) domain - the membrane proton channel. These two domains are linked by a central stalk rotating inside the F(1) region and a stationary peripheral stalk. During catalysis, ATP synthesis in the catalytic domain of F(1) is coupled via a rotary mechanism of the central stalk subunits to proton translocation. In vivo, can only synthesize ATP although its ATP hydrolase activity can be activated artificially in vitro. With the central stalk subunit gamma, is essential for the biogenesis of F(1) catalytic part of the ATP synthase complex namely in the formation of F1 assembly intermediate. The sequence is that of ATP synthase F(1) complex subunit delta, mitochondrial from Bos taurus (Bovine).